A 600-amino-acid polypeptide reads, in one-letter code: NADH-quinone oxidoreductase subunit C/D (600 aa).

The segment at 1 to 190 (MVNNMTDLTA…SPFELTKAKQ (190 aa)) is NADH dehydrogenase I subunit C. Residues 214–600 (DFMFLNLGPN…IDFVMSDVDR (387 aa)) are NADH dehydrogenase I subunit D.

It in the N-terminal section; belongs to the complex I 30 kDa subunit family. This sequence in the C-terminal section; belongs to the complex I 49 kDa subunit family. NDH-1 is composed of 13 different subunits. Subunits NuoB, CD, E, F, and G constitute the peripheral sector of the complex.

The protein resides in the cell inner membrane. It catalyses the reaction a quinone + NADH + 5 H(+)(in) = a quinol + NAD(+) + 4 H(+)(out). Functionally, NDH-1 shuttles electrons from NADH, via FMN and iron-sulfur (Fe-S) centers, to quinones in the respiratory chain. The immediate electron acceptor for the enzyme in this species is believed to be ubiquinone. Couples the redox reaction to proton translocation (for every two electrons transferred, four hydrogen ions are translocated across the cytoplasmic membrane), and thus conserves the redox energy in a proton gradient. The polypeptide is NADH-quinone oxidoreductase subunit C/D (Escherichia coli (strain ATCC 8739 / DSM 1576 / NBRC 3972 / NCIMB 8545 / WDCM 00012 / Crooks)).